Consider the following 327-residue polypeptide: Phosphate acyltransferase (327 aa).

The protein belongs to the PlsX family. As to quaternary structure, homodimer. Probably interacts with PlsY.

The protein resides in the cytoplasm. The enzyme catalyses a fatty acyl-[ACP] + phosphate = an acyl phosphate + holo-[ACP]. It functions in the pathway lipid metabolism; phospholipid metabolism. Catalyzes the reversible formation of acyl-phosphate (acyl-PO(4)) from acyl-[acyl-carrier-protein] (acyl-ACP). This enzyme utilizes acyl-ACP as fatty acyl donor, but not acyl-CoA. This is Phosphate acyltransferase from Thermosipho africanus (strain TCF52B).